The following is a 283-amino-acid chain: RuBisCO-associated protein (283 aa).

One can recognise a GH18 domain in the interval 5–283; it reads FKVFREFTSD…PEILLLAASK (279 aa). The Proton donor role is filled by Glu128.

This sequence belongs to the glycosyl hydrolase 18 family. In terms of assembly, forms part of the RuBisCO complex. As to expression, leaves.

This Glycine max (Soybean) protein is RuBisCO-associated protein.